Consider the following 381-residue polypeptide: Glycerate 2-kinase (381 aa).

This sequence belongs to the glycerate kinase type-1 family.

It catalyses the reaction (R)-glycerate + ATP = (2R)-2-phosphoglycerate + ADP + H(+). Its function is as follows. Catalyzes the transfer of the phosphate group from adenosine triphosphate (ATP) to (R)-glycerate to form (2R)-2-phosphoglycerate, an enzymatic step in (L)-glucarate/galactarate catabolic pathway. This chain is Glycerate 2-kinase (garK), found in Escherichia coli (strain K12).